The sequence spans 460 residues: Chromosomal replication initiator protein DnaA (460 aa).

The tract at residues 1–84 (MAVSLWQQCI…RFDIGSRPSA (84 aa)) is domain I, interacts with DnaA modulators. The tract at residues 84-123 (AKKPEPAPVAAVRVPNPQTKASVGTSFNTTEPVVNANHRS) is domain II. Residues 124 to 340 (NINPTYQFDN…GALNRVIANA (217 aa)) are domain III, AAA+ region. ATP is bound by residues glycine 168, glycine 170, lysine 171, and threonine 172. The interval 341 to 460 (NFTGRPITID…YANLIRTLSS (120 aa)) is domain IV, binds dsDNA.

It belongs to the DnaA family. In terms of assembly, oligomerizes as a right-handed, spiral filament on DNA at oriC.

The protein resides in the cytoplasm. Functionally, plays an essential role in the initiation and regulation of chromosomal replication. ATP-DnaA binds to the origin of replication (oriC) to initiate formation of the DNA replication initiation complex once per cell cycle. Binds the DnaA box (a 9 base pair repeat at the origin) and separates the double-stranded (ds)DNA. Forms a right-handed helical filament on oriC DNA; dsDNA binds to the exterior of the filament while single-stranded (ss)DNA is stabiized in the filament's interior. The ATP-DnaA-oriC complex binds and stabilizes one strand of the AT-rich DNA unwinding element (DUE), permitting loading of DNA polymerase. After initiation quickly degrades to an ADP-DnaA complex that is not apt for DNA replication. Binds acidic phospholipids. This is Chromosomal replication initiator protein DnaA from Shewanella sp. (strain MR-7).